A 911-amino-acid chain; its full sequence is Transcription factor E2F7 (911 aa).

S94 bears the Phosphoserine mark. A DNA-binding region spans residues 141–210; sequence RKQKSLGLLC…VAKNQYSWHG (70 aa). Disordered stretches follow at residues 239-281, 409-433, and 565-706; these read QKEL…ANSR, SFNSEQASERTQRKVNSEPSSPYRQ, and SPGS…SPLQ. Over residues 243–257 the composition is skewed to basic and acidic residues; sequence NPIDHKSGERRRDGC. A DNA-binding region spans residues 281–366; that stretch reads RKDKSLKIMS…GRKPAFKWIG (86 aa). S409 carries the post-translational modification Phosphoserine. Residues 415–424 show a composition bias toward basic and acidic residues; sequence ASERTQRKVN. The segment covering 566-579 has biased composition (gly residues); sequence PGSGSGSGSVGGGS. The span at 599-621 shows a compositional bias: basic and acidic residues; sequence ERRLQEEEEEPATKRQCRDHEDG. Residues 669–687 show a composition bias toward polar residues; sequence KATTNGFVSSEWGNPCSNT. Positions 688-698 are enriched in basic and acidic residues; sequence EIEKPSEENES. S840 is modified (phosphoserine). The tract at residues 873 to 911 is disordered; that stretch reads FFKTPGSLGDPVLRRKERNQSRSSSSAQRRLEISSGGTD.

Belongs to the E2F/DP family. As to quaternary structure, homodimer and heterodimer: mainly forms homodimers and, to a lesser extent, heterodimers with E2F8. Dimerization is important for DNA-binding. Interacts with HIF1A. Interacts with MN1.

The protein localises to the nucleus. In terms of biological role, atypical E2F transcription factor that participates in various processes such as angiogenesis, polyploidization of specialized cells and DNA damage response. Mainly acts as a transcription repressor that binds DNA independently of DP proteins and specifically recognizes the E2 recognition site 5'-TTTC[CG]CGC-3'. Directly represses transcription of classical E2F transcription factors such as E2F1. Acts as a regulator of S-phase by recognizing and binding the E2-related site 5'-TTCCCGCC-3' and mediating repression of G1/S-regulated genes. Plays a key role in polyploidization of cells in placenta and liver by regulating the endocycle, probably by repressing genes promoting cytokinesis and antagonizing action of classical E2F proteins (E2F1, E2F2 and/or E2F3). Required for placental development by promoting polyploidization of trophoblast giant cells. Also involved in DNA damage response: up-regulated by p53/TP53 following genotoxic stress and acts as a downstream effector of p53/TP53-dependent repression by mediating repression of indirect p53/TP53 target genes involved in DNA replication. Acts as a promoter of sprouting angiogenesis, possibly by acting as a transcription activator: associates with HIF1A, recognizes and binds the VEGFA promoter, which is different from canonical E2 recognition site, and activates expression of the VEGFA gene. Acts as a negative regulator of keratinocyte differentiation. This chain is Transcription factor E2F7 (E2F7), found in Bos taurus (Bovine).